Here is a 340-residue protein sequence, read N- to C-terminus: Protein-arginine kinase (340 aa).

One can recognise a Phosphagen kinase C-terminal domain in the interval 21 to 242 (VVLSSRIRLA…EQIIMQERIA (222 aa)). Residues 24–28 (SSRIR), His79, Arg113, 164–168 (RASVM), and 195–200 (RGIYGE) contribute to the ATP site.

The protein belongs to the ATP:guanido phosphotransferase family.

The catalysed reaction is L-arginyl-[protein] + ATP = N(omega)-phospho-L-arginyl-[protein] + ADP + H(+). Catalyzes the specific phosphorylation of arginine residues in proteins. The polypeptide is Protein-arginine kinase (Listeria monocytogenes serotype 4a (strain HCC23)).